Reading from the N-terminus, the 209-residue chain is GTP-binding nuclear protein Ran1A (209 aa).

The 162-residue stretch at 1-162 (NFKLVIVGDG…LYLARKLAGD (162 aa)) folds into the Small GTPase Ran-type domain. A GTP-binding site is contributed by 9–16 (DGGTGKTT). The tract at residues 28–36 (KKYEPTIGV) is switch-I. GTP is bound by residues G59, 113–116 (NKVD), and 141–143 (SAK). Residues 59–75 (GQEKFGGLRDGYYIHGQ) are switch-II. A compositionally biased stretch (low complexity) spans 187–196 (QHEAELAQAA). The interval 187-209 (QHEAELAQAASQPLPDDDDDAFD) is disordered.

It belongs to the small GTPase superfamily. Ran family. Found in a nuclear export complex with RanGTP, exportin and pre-miRNA.

It localises to the nucleus. Functionally, GTP-binding protein involved in nucleocytoplasmic transport. Required for the import of protein into the nucleus and also for RNA export. Involved in chromatin condensation and control of cell cycle. The chain is GTP-binding nuclear protein Ran1A (RAN1A) from Lotus japonicus (Lotus corniculatus var. japonicus).